The sequence spans 146 residues: Snaclec coagulation factor X-activating enzyme light chain 1 (146 aa).

Residues 1–23 (MGRFISVSFGCLVVFLSLSGTEA) form the signal peptide. An intrachain disulfide couples cysteine 27 to cysteine 38. One can recognise a C-type lectin domain in the interval 34-145 (YEQHCYKGFN…CNFIAPVVCK (112 aa)). Asparagine 47 is a glycosylation site (N-linked (GlcNAc...) (complex) asparagine). 2 disulfides stabilise this stretch: cysteine 55–cysteine 144 and cysteine 121–cysteine 136.

It belongs to the snaclec family. In terms of assembly, heterotrimer; disulfide-linked. The heterotrimer consists of 1 heavy chain (a metalloproteinase) and 2 light chains: LC1 and LC2. In terms of processing, N-glycosylated; probably required for conformation. Removal of easily accessible sugars does not change its functional capacity, but removal of the core sugars with N-glycanase causes a virtually complete loss of enzyme activity, apparently as a result of major conformational changes in the molecule. Not O-glycosylated. As to expression, expressed by the venom gland.

Its subcellular location is the secreted. In terms of biological role, regulatory subunit of the blood coagulation factor X- and IX-activating enzyme. The enzyme activates coagulation factor X (F10) by cleaving the Arg-Ile bond and is also able to activate coagulation factor IX (F9) and protein S (PROS1) by specific cleavage of Arg-Ile and Arg-Val bonds. May serve as an exosite by which the enzyme recognizes and binds to the Gla domain of factor X (F10) and factor IX (F9) in a calcium-dependent manner. The chain is Snaclec coagulation factor X-activating enzyme light chain 1 (LC1) from Daboia siamensis (Eastern Russel's viper).